A 283-amino-acid chain; its full sequence is NAD kinase (283 aa).

Residue D65 is the Proton acceptor of the active site. NAD(+)-binding positions include 65 to 66, 139 to 140, R150, R167, D169, 180 to 185, and Q239; these read DG, ND, and TGYSVS.

The protein belongs to the NAD kinase family. Requires a divalent metal cation as cofactor.

Its subcellular location is the cytoplasm. The enzyme catalyses NAD(+) + ATP = ADP + NADP(+) + H(+). Functionally, involved in the regulation of the intracellular balance of NAD and NADP, and is a key enzyme in the biosynthesis of NADP. Catalyzes specifically the phosphorylation on 2'-hydroxyl of the adenosine moiety of NAD to yield NADP. In Nitratidesulfovibrio vulgaris (strain DSM 19637 / Miyazaki F) (Desulfovibrio vulgaris), this protein is NAD kinase.